The sequence spans 296 residues: Phosphatidylserine decarboxylase proenzyme (296 aa).

Residues aspartate 113, histidine 169, and serine 256 each act as charge relay system; for autoendoproteolytic cleavage activity in the active site. Catalysis depends on serine 256, which acts as the Schiff-base intermediate with substrate; via pyruvic acid; for decarboxylase activity. At serine 256 the chain carries Pyruvic acid (Ser); by autocatalysis.

It belongs to the phosphatidylserine decarboxylase family. PSD-B subfamily. Prokaryotic type II sub-subfamily. In terms of assembly, heterodimer of a large membrane-associated beta subunit and a small pyruvoyl-containing alpha subunit. Requires pyruvate as cofactor. Is synthesized initially as an inactive proenzyme. Formation of the active enzyme involves a self-maturation process in which the active site pyruvoyl group is generated from an internal serine residue via an autocatalytic post-translational modification. Two non-identical subunits are generated from the proenzyme in this reaction, and the pyruvate is formed at the N-terminus of the alpha chain, which is derived from the carboxyl end of the proenzyme. The autoendoproteolytic cleavage occurs by a canonical serine protease mechanism, in which the side chain hydroxyl group of the serine supplies its oxygen atom to form the C-terminus of the beta chain, while the remainder of the serine residue undergoes an oxidative deamination to produce ammonia and the pyruvoyl prosthetic group on the alpha chain. During this reaction, the Ser that is part of the protease active site of the proenzyme becomes the pyruvoyl prosthetic group, which constitutes an essential element of the active site of the mature decarboxylase.

It localises to the cell membrane. It catalyses the reaction a 1,2-diacyl-sn-glycero-3-phospho-L-serine + H(+) = a 1,2-diacyl-sn-glycero-3-phosphoethanolamine + CO2. Its pathway is phospholipid metabolism; phosphatidylethanolamine biosynthesis; phosphatidylethanolamine from CDP-diacylglycerol: step 2/2. Functionally, catalyzes the formation of phosphatidylethanolamine (PtdEtn) from phosphatidylserine (PtdSer). The chain is Phosphatidylserine decarboxylase proenzyme from Clostridium botulinum (strain Alaska E43 / Type E3).